A 34-amino-acid chain; its full sequence is Photosystem I reaction center subunit XII (34 aa).

The chain crosses the membrane as a helical span at residues 9 to 29 (LIILGLIVVMHAGVLALRLGI).

This sequence belongs to the PsaM family.

Its subcellular location is the cellular thylakoid membrane. The sequence is that of Photosystem I reaction center subunit XII from Prochlorococcus marinus subsp. pastoris (strain CCMP1986 / NIES-2087 / MED4).